The sequence spans 622 residues: Low affinity potassium transport system protein Kup (622 aa).

12 helical membrane-spanning segments follow: residues 9–29 (LPAI…TSPL), 49–69 (VFGF…IKYL), 103–123 (VIMG…TPAI), 137–157 (PQLD…LFMI), 165–185 (VGKL…GLGL), 213–233 (VSFI…ALYA), 247–267 (WFTV…ALLL), 276–296 (PFFL…AALA), 337–357 (IYIP…IVSF), 363–383 (LAAA…ILST), 396–416 (FVAL…TANL), and 419–439 (LLSG…VMTT).

It belongs to the HAK/KUP transporter (TC 2.A.72) family.

The protein localises to the cell inner membrane. The catalysed reaction is K(+)(in) + H(+)(in) = K(+)(out) + H(+)(out). Functionally, responsible for the low-affinity transport of potassium into the cell. Likely operates as a K(+):H(+) symporter. The sequence is that of Low affinity potassium transport system protein Kup from Shigella flexneri serotype 5b (strain 8401).